The sequence spans 259 residues: Small ribosomal subunit protein uS2 (259 aa).

The protein belongs to the universal ribosomal protein uS2 family.

In Streptococcus pneumoniae (strain Hungary19A-6), this protein is Small ribosomal subunit protein uS2.